Here is a 217-residue protein sequence, read N- to C-terminus: Probable GTP-binding protein EngB (217 aa).

In terms of domain architecture, EngB-type G spans 44–217; that stretch reads DRIEVCFAGR…TLRTIVATLG (174 aa). GTP-binding positions include 52–59, 79–83, 97–100, 164–167, and 198–200; these read GRSNVGKS, GRTQE, DLPG, TKAD, and TSS. Serine 59 and threonine 81 together coordinate Mg(2+).

It belongs to the TRAFAC class TrmE-Era-EngA-EngB-Septin-like GTPase superfamily. EngB GTPase family. It depends on Mg(2+) as a cofactor.

In terms of biological role, necessary for normal cell division and for the maintenance of normal septation. This is Probable GTP-binding protein EngB from Cereibacter sphaeroides (strain ATCC 17023 / DSM 158 / JCM 6121 / CCUG 31486 / LMG 2827 / NBRC 12203 / NCIMB 8253 / ATH 2.4.1.) (Rhodobacter sphaeroides).